A 94-amino-acid polypeptide reads, in one-letter code: Integration host factor subunit beta (94 aa).

Belongs to the bacterial histone-like protein family. As to quaternary structure, heterodimer of an alpha and a beta chain.

In terms of biological role, this protein is one of the two subunits of integration host factor, a specific DNA-binding protein that functions in genetic recombination as well as in transcriptional and translational control. This Salmonella arizonae (strain ATCC BAA-731 / CDC346-86 / RSK2980) protein is Integration host factor subunit beta.